The sequence spans 396 residues: MIIKPKVRGFICTNAHPKGCAANVQAQIEYTQAQGKIENGPKNVLVVGASTGYGLASRIVAAFGCGAKTLGLFFEKPGTERKTGTAGFYNVAAFQQAAEKAGLWSKNMNGDAFSHEAKSKAIDVIKAEMGKIDLVVYSLASPRRQDPDSGEVYSSVLKPVGQAYTSKNLNTDTLKITETTLDAASDEEIAQTIKVMGGEDWELWMNALAEADVLAEGCKTVAYTYLGEKITWPIYGKATIGKAKEDLDRAATAIASAHSEKNISANVAVLKAVVTQASSAIPIMPLYLSALFKVMKANGTQEGCIEQLNRLFTECLYSDSPRLDDANRFRVDEKELSPEVQAGVEALWGEITEENLLEISDFKGYQQEFLGLFGFGVDGVDYEEDVDPNVALALVE.

NAD(+)-binding positions include 48-53, 74-75, 111-112, and 139-140; these read GASTGY, FE, DA, and LA. Tyr225 serves as a coordination point for substrate. The active-site Proton donor is Tyr235. NAD(+) contacts are provided by residues Lys244 and 273–275; that span reads VVT.

This sequence belongs to the TER reductase family. As to quaternary structure, monomer.

It catalyses the reaction a 2,3-saturated acyl-[ACP] + NAD(+) = a (2E)-enoyl-[ACP] + NADH + H(+). Its pathway is lipid metabolism; fatty acid biosynthesis. Its function is as follows. Involved in the final reduction of the elongation cycle of fatty acid synthesis (FAS II). Catalyzes the reduction of a carbon-carbon double bond in an enoyl moiety that is covalently linked to an acyl carrier protein (ACP). The sequence is that of Enoyl-[acyl-carrier-protein] reductase [NADH] from Teredinibacter turnerae (strain ATCC 39867 / T7901).